A 322-amino-acid chain; its full sequence is Extracellular metalloprotease AFUA_1G07730 (322 aa).

Positions 1–22 (MLPFNSCVYVLLIISLMSNCRA) are cleaved as a signal peptide. N-linked (GlcNAc...) asparagine glycans are attached at residues Asn123 and Asn197. A Zn(2+)-binding site is contributed by His233. Residue Glu234 is part of the active site. Residue His237 participates in Zn(2+) binding. An intrachain disulfide couples Cys272 to Cys299.

Belongs to the peptidase M43B family.

Its subcellular location is the secreted. Its function is as follows. Secreted metalloproteinase that allows assimilation of proteinaceous substrates. Plays a pivotal role as a pathogenicity determinant during infections and contributes to the ability of the pathogen to persist within the mammalian host. This Aspergillus fumigatus (strain ATCC MYA-4609 / CBS 101355 / FGSC A1100 / Af293) (Neosartorya fumigata) protein is Extracellular metalloprotease AFUA_1G07730.